Reading from the N-terminus, the 512-residue chain is Kynurenine 3-monooxygenase (512 aa).

The protein belongs to the aromatic-ring hydroxylase family. KMO subfamily. The cofactor is FAD.

Its subcellular location is the mitochondrion outer membrane. The catalysed reaction is L-kynurenine + NADPH + O2 + H(+) = 3-hydroxy-L-kynurenine + NADP(+) + H2O. Its pathway is cofactor biosynthesis; NAD(+) biosynthesis; quinolinate from L-kynurenine: step 1/3. In terms of biological role, catalyzes the hydroxylation of L-kynurenine (L-Kyn) to form 3-hydroxy-L-kynurenine (L-3OHKyn). Required for synthesis of quinolinic acid. The sequence is that of Kynurenine 3-monooxygenase (bna4) from Neosartorya fischeri (strain ATCC 1020 / DSM 3700 / CBS 544.65 / FGSC A1164 / JCM 1740 / NRRL 181 / WB 181) (Aspergillus fischerianus).